The sequence spans 767 residues: Actin filament-associated protein 1-like 1 (767 aa).

Residues 83–97 (LRDMSDDGERSKEAS) show a composition bias toward basic and acidic residues. The segment at 83–145 (LRDMSDDGER…KSPEYISSHN (63 aa)) is disordered. A phosphoserine mark is found at serine 87, serine 93, serine 97, serine 103, and serine 152. Positions 164–173 (SYPTTRMNGE) are enriched in polar residues. The segment at 164-210 (SYPTTRMNGESKSSYNDSDAMSSSYESYDEEEEEEKGRQPKHQWPSE) is disordered. Positions 174–189 (SKSSYNDSDAMSSSYE) are enriched in low complexity. A PH 1 domain is found at 219–315 (DCRICAFLLR…WLKVIREVSR (97 aa)). Phosphoserine is present on residues serine 328 and serine 342. Positions 341 to 381 (LSQEKQNSDSDSLGMNDSSSTLSRREACEHGKGKKNSLAEL) are disordered. Residues 349-362 (DSDSLGMNDSSSTL) show a composition bias toward polar residues. The 95-residue stretch at 417–511 (EAPCCGYLNV…WLGLLLVEMG (95 aa)) folds into the PH 2 domain. Position 556 is a phosphotyrosine (tyrosine 556). Residues 563–605 (KVQDEEPQRPTGAQVKRHASSCSEKSHRADPQVKVKRHASSAN) form a disordered region. Residues 586–595 (EKSHRADPQV) show a composition bias toward basic and acidic residues. A coiled-coil region spans residues 610-700 (GKNRAEEDAR…AVKERLQQSL (91 aa)). The interval 704 to 767 (PALGLSVSSK…KAKEWEMKKT (64 aa)) is disordered. The span at 709–733 (SVSSKSKSQETTNKPQSSVPEQSLP) shows a compositional bias: polar residues. The residue at position 746 (serine 746) is a Phosphoserine. A compositionally biased stretch (basic and acidic residues) spans 758-767 (KAKEWEMKKT).

Interacts with CTTN.

Its subcellular location is the cytoplasm. The protein resides in the cell projection. The protein localises to the podosome. It is found in the invadopodium. In terms of biological role, may be involved in podosome and invadosome formation. This is Actin filament-associated protein 1-like 1 (Afap1l1) from Rattus norvegicus (Rat).